A 221-amino-acid chain; its full sequence is ATP phosphoribosyltransferase (221 aa).

Belongs to the ATP phosphoribosyltransferase family. Short subfamily. In terms of assembly, heteromultimer composed of HisG and HisZ subunits.

It is found in the cytoplasm. The enzyme catalyses 1-(5-phospho-beta-D-ribosyl)-ATP + diphosphate = 5-phospho-alpha-D-ribose 1-diphosphate + ATP. The protein operates within amino-acid biosynthesis; L-histidine biosynthesis; L-histidine from 5-phospho-alpha-D-ribose 1-diphosphate: step 1/9. Functionally, catalyzes the condensation of ATP and 5-phosphoribose 1-diphosphate to form N'-(5'-phosphoribosyl)-ATP (PR-ATP). Has a crucial role in the pathway because the rate of histidine biosynthesis seems to be controlled primarily by regulation of HisG enzymatic activity. This chain is ATP phosphoribosyltransferase, found in Rhizorhabdus wittichii (strain DSM 6014 / CCUG 31198 / JCM 15750 / NBRC 105917 / EY 4224 / RW1) (Sphingomonas wittichii).